The sequence spans 582 residues: Probable DNA ligase (582 aa).

Glu243 provides a ligand contact to ATP. Lys245 acts as the N6-AMP-lysine intermediate in catalysis. Positions 250, 265, 295, 335, 410, and 416 each coordinate ATP.

This sequence belongs to the ATP-dependent DNA ligase family. It depends on Mg(2+) as a cofactor.

The enzyme catalyses ATP + (deoxyribonucleotide)n-3'-hydroxyl + 5'-phospho-(deoxyribonucleotide)m = (deoxyribonucleotide)n+m + AMP + diphosphate.. DNA ligase that seals nicks in double-stranded DNA during DNA replication, DNA recombination and DNA repair. The sequence is that of Probable DNA ligase from Dictyoglomus thermophilum (strain ATCC 35947 / DSM 3960 / H-6-12).